We begin with the raw amino-acid sequence, 393 residues long: Sulfate adenylyltransferase (393 aa).

It belongs to the sulfate adenylyltransferase family.

The enzyme catalyses sulfate + ATP + H(+) = adenosine 5'-phosphosulfate + diphosphate. The protein operates within sulfur metabolism; hydrogen sulfide biosynthesis; sulfite from sulfate: step 1/3. This chain is Sulfate adenylyltransferase, found in Synechococcus sp. (strain JA-3-3Ab) (Cyanobacteria bacterium Yellowstone A-Prime).